An 80-amino-acid chain; its full sequence is Omega-conotoxin-like PuIA (80 aa).

An N-terminal signal peptide occupies residues 1–22 (MKLTCVMIVAVLFLTAWTFVTA). Positions 23 to 50 (DSIRALEDLFAKAPDEMENSGASPLNER) are excised as a propeptide. 3 cysteine pairs are disulfide-bonded: C52–C70, C59–C74, and C69–C78.

It belongs to the conotoxin O1 superfamily. As to expression, expressed by the venom duct.

It localises to the secreted. Omega-conotoxins act at presynaptic membranes, they bind and block voltage-gated calcium channels (Cav). The chain is Omega-conotoxin-like PuIA from Conus pulicarius (Flea-bitten cone).